A 299-amino-acid polypeptide reads, in one-letter code: Cytidine deaminase (299 aa).

CMP/dCMP-type deaminase domains follow at residues 56–176 (SKIE…FGPK) and 194–299 (LQGD…YIAV). 97–99 (NQE) contacts substrate. Zn(2+) is bound at residue histidine 110. Glutamate 112 functions as the Proton donor in the catalytic mechanism. Cysteine 137 and cysteine 140 together coordinate Zn(2+).

It belongs to the cytidine and deoxycytidylate deaminase family. Homodimer. The cofactor is Zn(2+).

It catalyses the reaction cytidine + H2O + H(+) = uridine + NH4(+). The enzyme catalyses 2'-deoxycytidine + H2O + H(+) = 2'-deoxyuridine + NH4(+). In terms of biological role, this enzyme scavenges exogenous and endogenous cytidine and 2'-deoxycytidine for UMP synthesis. The sequence is that of Cytidine deaminase from Haemophilus ducreyi (strain 35000HP / ATCC 700724).